We begin with the raw amino-acid sequence, 196 residues long: Ribosome maturation factor RimP (196 aa).

It belongs to the RimP family.

Its subcellular location is the cytoplasm. Required for maturation of 30S ribosomal subunits. This Dinoroseobacter shibae (strain DSM 16493 / NCIMB 14021 / DFL 12) protein is Ribosome maturation factor RimP.